The following is a 698-amino-acid chain: Inner centromere protein SLI15 (698 aa).

Serine 268 carries the phosphoserine modification. Disordered regions lie at residues 365 to 390, 405 to 444, and 455 to 474; these read KNKITKNNSPKGKNSRKSSIPRFDKT, EQKKKSKHSSDVHKTGSRPHSISPTKISVDSSSPSKEVKN, and RPTKASISPNKNKNLTTSQT. Polar residues-rich tracts occupy residues 422–439 and 459–474; these read RPHSISPTKISVDSSSPS and ASISPNKNKNLTTSQT. A Phosphoserine modification is found at serine 489. Positions 535–560 are disordered; sequence IMRSQQEHHRRKQEKQKRMSHLEQDL. The span at 550-560 shows a compositional bias: basic and acidic residues; that stretch reads QKRMSHLEQDL.

This sequence belongs to the INCENP family. As to quaternary structure, component of the CPC complex at least composed of IPL1, BIR1 and SLI15. Post-translationally, phosphorylated by serine/threonine protein kinase IPL1.

The protein localises to the nucleus. Its subcellular location is the cytoplasm. It is found in the cytoskeleton. The protein resides in the spindle. It localises to the chromosome. The protein localises to the centromere. Its subcellular location is the kinetochore. In terms of biological role, component of the chromosomal passenger complex (CPC), a complex that acts as a key regulator of mitosis. Stimulates IPL1 kinase activity and facilitates its association with the mitotic spindle. Has a role in attaching the kinetochores to the microtubules and ensuring that sister kinetochores connect to opposite poles. This chain is Inner centromere protein SLI15 (SLI15), found in Saccharomyces cerevisiae (strain ATCC 204508 / S288c) (Baker's yeast).